Reading from the N-terminus, the 151-residue chain is D-aminoacyl-tRNA deacylase (151 aa).

The Gly-cisPro motif, important for rejection of L-amino acids motif lies at 137–138; it reads GP.

Belongs to the DTD family. In terms of assembly, homodimer.

It is found in the cytoplasm. The catalysed reaction is glycyl-tRNA(Ala) + H2O = tRNA(Ala) + glycine + H(+). It catalyses the reaction a D-aminoacyl-tRNA + H2O = a tRNA + a D-alpha-amino acid + H(+). Functionally, an aminoacyl-tRNA editing enzyme that deacylates mischarged D-aminoacyl-tRNAs. Also deacylates mischarged glycyl-tRNA(Ala), protecting cells against glycine mischarging by AlaRS. Acts via tRNA-based rather than protein-based catalysis; rejects L-amino acids rather than detecting D-amino acids in the active site. By recycling D-aminoacyl-tRNA to D-amino acids and free tRNA molecules, this enzyme counteracts the toxicity associated with the formation of D-aminoacyl-tRNA entities in vivo and helps enforce protein L-homochirality. The protein is D-aminoacyl-tRNA deacylase of Geobacter metallireducens (strain ATCC 53774 / DSM 7210 / GS-15).